Consider the following 451-residue polypeptide: Probable D-serine dehydratase (451 aa).

The residue at position 119 (lysine 119) is an N6-(pyridoxal phosphate)lysine.

The protein belongs to the serine/threonine dehydratase family. DsdA subfamily. Pyridoxal 5'-phosphate is required as a cofactor.

It carries out the reaction D-serine = pyruvate + NH4(+). In Acidovorax sp. (strain JS42), this protein is Probable D-serine dehydratase.